We begin with the raw amino-acid sequence, 401 residues long: E3 ubiquitin-protein ligase RGLG4 (401 aa).

Positions 1–43 (MTMGNFLKRFGSGKSRSSRNMTLGTTSSQSHEPSPSDPSLSLA) are disordered. Over residues 8-19 (KRFGSGKSRSSR) the composition is skewed to low complexity. Residues 20–32 (NMTLGTTSSQSHE) show a composition bias toward polar residues. Positions 79-299 (NLILGVDFTK…KETAFALAAL (221 aa)) constitute a VWFA domain. The tract at residues 326-350 (VPRPPPIPYTPPTNAELPSTASPAS) is disordered. Positions 327–336 (PRPPPIPYTP) are enriched in pro residues. The segment covering 341 to 350 (ELPSTASPAS) has biased composition (polar residues). The RING-type zinc-finger motif lies at 357–390 (CPICLTNRKDVAFSCGHMTCGDCGSKISNCPICR).

Interacts with UBC30, GRXS17 and GLB3. Widely expressed.

It is found in the cytoplasm. It localises to the nucleus. It carries out the reaction S-ubiquitinyl-[E2 ubiquitin-conjugating enzyme]-L-cysteine + [acceptor protein]-L-lysine = [E2 ubiquitin-conjugating enzyme]-L-cysteine + N(6)-ubiquitinyl-[acceptor protein]-L-lysine.. Possesses E3 ubiquitin-protein ligase in vitro. Acts as upstream modulator of jasmonate (JA) signaling in response to various stimuli, such as JA-inhibited root growth, JA-inductive gene expression, coronatine-mediated pathogen susceptibility, wound-stimulated expression of JA-responsive genes and wound-induced JA biosynthesis. Controls fumonisin B1 (FB1)-triggered programmed cell death (PCD) by modulating the JA signaling pathway. May mediate salicylic acid (SA) suppression of JA signaling in FB1-induced responses. May mediate the formation of 'Lys-48'-linked multiubiquitin chains. Mediates the polyubiquitination and subsequent proteasomal degradation of the target protein GRXS17. The protein is E3 ubiquitin-protein ligase RGLG4 of Arabidopsis thaliana (Mouse-ear cress).